A 1124-amino-acid polypeptide reads, in one-letter code: Tyrosine-protein kinase JAK3 (1124 aa).

Residues 1 to 223 (MAPPSEETPL…RRTVRRALRR (223 aa)) form an interaction with cytokine/interferon/growth hormone receptors region. Phosphoserine is present on serine 17. The FERM domain maps to 24–356 (GALHVLLPAR…GYFRLTTDSQ (333 aa)). The region spanning 375–475 (QCHGPITLDF…GVAVTLTSCC (101 aa)) is the SH2; atypical domain. In terms of domain architecture, Protein kinase 1 spans 521 to 781 (LEWHENLGHG…AVIRDLNSLI (261 aa)). Tyrosine 785 is modified (phosphotyrosine; by autocatalysis). Residues 822-1111 (LKYISQLGKG…SRGCETHAFT (290 aa)) form the Protein kinase 2 domain. Residues 828–836 (LGKGNFGSV) and lysine 855 each bind ATP. Phosphotyrosine occurs at positions 904 and 939. The active-site Proton acceptor is the aspartate 949. Tyrosine 980 and tyrosine 981 each carry phosphotyrosine; by autocatalysis.

Belongs to the protein kinase superfamily. Tyr protein kinase family. JAK subfamily. As to quaternary structure, interacts with STAM2 and MYO18A. Interacts with SHB. Interacts with CD69. In terms of processing, tyrosine phosphorylated in response to IL-2 and IL-4. Dephosphorylation of Tyr-980 and Tyr-981 by PTPN2 negatively regulates cytokine-mediated signaling. As to expression, in NK cells and an NK-like cell line but not in resting T-cells or in other tissues. The S-form is more commonly seen in hematopoietic lines, whereas the B-form is detected in cells both of hematopoietic and epithelial origins.

It is found in the endomembrane system. It localises to the cytoplasm. It catalyses the reaction L-tyrosyl-[protein] + ATP = O-phospho-L-tyrosyl-[protein] + ADP + H(+). Functionally, non-receptor tyrosine kinase involved in various processes such as cell growth, development, or differentiation. Mediates essential signaling events in both innate and adaptive immunity and plays a crucial role in hematopoiesis during T-cells development. In the cytoplasm, plays a pivotal role in signal transduction via its association with type I receptors sharing the common subunit gamma such as IL2R, IL4R, IL7R, IL9R, IL15R and IL21R. Following ligand binding to cell surface receptors, phosphorylates specific tyrosine residues on the cytoplasmic tails of the receptor, creating docking sites for STATs proteins. Subsequently, phosphorylates the STATs proteins once they are recruited to the receptor. Phosphorylated STATs then form homodimer or heterodimers and translocate to the nucleus to activate gene transcription. For example, upon IL2R activation by IL2, JAK1 and JAK3 molecules bind to IL2R beta (IL2RB) and gamma chain (IL2RG) subunits inducing the tyrosine phosphorylation of both receptor subunits on their cytoplasmic domain. Then, STAT5A and STAT5B are recruited, phosphorylated and activated by JAK1 and JAK3. Once activated, dimerized STAT5 translocates to the nucleus and promotes the transcription of specific target genes in a cytokine-specific fashion. The chain is Tyrosine-protein kinase JAK3 from Homo sapiens (Human).